The sequence spans 320 residues: Cytochrome f (320 aa).

An N-terminal signal peptide occupies residues 1 to 35 (MQNRNTFSWVKEQMTRFISVSIMIYVITRTSISNA). Residues Tyr-36, Cys-56, Cys-59, and His-60 each coordinate heme. The chain crosses the membrane as a helical span at residues 286-306 (VQGLLFFLASVILAQIFLVLK).

It belongs to the cytochrome f family. In terms of assembly, the 4 large subunits of the cytochrome b6-f complex are cytochrome b6, subunit IV (17 kDa polypeptide, petD), cytochrome f and the Rieske protein, while the 4 small subunits are PetG, PetL, PetM and PetN. The complex functions as a dimer. The cofactor is heme.

The protein localises to the plastid. It localises to the chloroplast thylakoid membrane. Functionally, component of the cytochrome b6-f complex, which mediates electron transfer between photosystem II (PSII) and photosystem I (PSI), cyclic electron flow around PSI, and state transitions. The chain is Cytochrome f from Liriodendron tulipifera (Tuliptree).